Consider the following 440-residue polypeptide: tRNA-2-methylthio-N(6)-dimethylallyladenosine synthase (440 aa).

The MTTase N-terminal domain maps to 3-119 (KKFFIKTFGC…LPELINQAQA (117 aa)). [4Fe-4S] cluster is bound by residues C12, C48, C82, C158, C162, and C165. The Radical SAM core domain maps to 144–374 (RDNKYCAYVT…LELQKSILSE (231 aa)). The 61-residue stretch at 377 to 437 (KKYEGTVQEV…PFSLEGELLE (61 aa)) folds into the TRAM domain.

It belongs to the methylthiotransferase family. MiaB subfamily. Monomer. It depends on [4Fe-4S] cluster as a cofactor.

The protein localises to the cytoplasm. The catalysed reaction is N(6)-dimethylallyladenosine(37) in tRNA + (sulfur carrier)-SH + AH2 + 2 S-adenosyl-L-methionine = 2-methylsulfanyl-N(6)-dimethylallyladenosine(37) in tRNA + (sulfur carrier)-H + 5'-deoxyadenosine + L-methionine + A + S-adenosyl-L-homocysteine + 2 H(+). Functionally, catalyzes the methylthiolation of N6-(dimethylallyl)adenosine (i(6)A), leading to the formation of 2-methylthio-N6-(dimethylallyl)adenosine (ms(2)i(6)A) at position 37 in tRNAs that read codons beginning with uridine. The protein is tRNA-2-methylthio-N(6)-dimethylallyladenosine synthase of Aquifex aeolicus (strain VF5).